The chain runs to 356 residues: DNA polymerase IV (356 aa).

Positions 6 to 187 (IIHIDMDYFF…LDIGDFPGVG (182 aa)) constitute a UmuC domain. Positions 10 and 105 each coordinate Mg(2+). Residue glutamate 106 is part of the active site.

The protein belongs to the DNA polymerase type-Y family. As to quaternary structure, monomer. Requires Mg(2+) as cofactor.

It localises to the cytoplasm. It catalyses the reaction DNA(n) + a 2'-deoxyribonucleoside 5'-triphosphate = DNA(n+1) + diphosphate. In terms of biological role, poorly processive, error-prone DNA polymerase involved in untargeted mutagenesis. Copies undamaged DNA at stalled replication forks, which arise in vivo from mismatched or misaligned primer ends. These misaligned primers can be extended by PolIV. Exhibits no 3'-5' exonuclease (proofreading) activity. May be involved in translesional synthesis, in conjunction with the beta clamp from PolIII. The polypeptide is DNA polymerase IV (Staphylococcus epidermidis (strain ATCC 35984 / DSM 28319 / BCRC 17069 / CCUG 31568 / BM 3577 / RP62A)).